A 67-amino-acid polypeptide reads, in one-letter code: Large ribosomal subunit protein bL31 (67 aa).

Cysteine 16, cysteine 18, cysteine 38, and cysteine 41 together coordinate Zn(2+).

It belongs to the bacterial ribosomal protein bL31 family. Type A subfamily. In terms of assembly, part of the 50S ribosomal subunit. Zn(2+) serves as cofactor.

In terms of biological role, binds the 23S rRNA. This chain is Large ribosomal subunit protein bL31, found in Thioalkalivibrio sulfidiphilus (strain HL-EbGR7).